The chain runs to 42 residues: MKVMGSLKSAKSRDRDCKIVRRKGRIYVINKKKPRFKARQGY.

The protein belongs to the bacterial ribosomal protein bL36 family.

The polypeptide is Large ribosomal subunit protein bL36 (Anaplasma marginale (strain St. Maries)).